A 353-amino-acid polypeptide reads, in one-letter code: Probable cytochrome c oxidase subunit 2 (353 aa).

An N-terminal signal peptide occupies residues 1–42 (MTARELVCSQRVGQGLSRRLRPLVLAVTLGVLVVTLSGCSWS). Transmembrane regions (helical) follow at residues 63-83 (LWIGAVVASLVVGVIVWGLIF) and 110-130 (LVLTVTPFLIISMLFYFTVIV). Cu cation contacts are provided by histidine 246, cysteine 287, cysteine 291, and histidine 295.

This sequence belongs to the cytochrome c oxidase subunit 2 family. Cu cation serves as cofactor. The cofactor is heme.

It localises to the cell membrane. The enzyme catalyses 4 Fe(II)-[cytochrome c] + O2 + 8 H(+)(in) = 4 Fe(III)-[cytochrome c] + 2 H2O + 4 H(+)(out). Its function is as follows. Subunits I and II form the functional core of the enzyme complex. Electrons originating in cytochrome c are transferred via heme a and Cu(A) to the binuclear center formed by heme a3 and Cu(B). The polypeptide is Probable cytochrome c oxidase subunit 2 (ctaC) (Mycobacterium leprae (strain TN)).